Consider the following 449-residue polypeptide: Argininosuccinate synthase (449 aa).

Residues 17 to 25 (AFSGGLDTS) and Ala43 each bind ATP. Tyr99 serves as a coordination point for L-citrulline. Positions 129 and 131 each coordinate ATP. Residues Thr131, Asn135, and Asp136 each coordinate L-aspartate. An L-citrulline-binding site is contributed by Asn135. Asp136 lines the ATP pocket. L-citrulline-binding residues include Arg139 and Ser192. Asp194 serves as a coordination point for ATP. Residues Thr201, Glu203, and Glu280 each contribute to the L-citrulline site.

Belongs to the argininosuccinate synthase family. Type 2 subfamily. In terms of assembly, homotetramer.

The protein resides in the cytoplasm. It carries out the reaction L-citrulline + L-aspartate + ATP = 2-(N(omega)-L-arginino)succinate + AMP + diphosphate + H(+). It participates in amino-acid biosynthesis; L-arginine biosynthesis; L-arginine from L-ornithine and carbamoyl phosphate: step 2/3. The protein is Argininosuccinate synthase of Dickeya dadantii (strain 3937) (Erwinia chrysanthemi (strain 3937)).